The chain runs to 351 residues: Sulfate/thiosulfate import ATP-binding protein CysA (351 aa).

Residues 3–237 form the ABC transporter domain; that stretch reads ITVRNLHKRF…PRSAFVYEFL (235 aa). ATP is bound at residue 35-42; that stretch reads GPSGCGKT.

This sequence belongs to the ABC transporter superfamily. Sulfate/tungstate importer (TC 3.A.1.6) family. The complex is composed of two ATP-binding proteins (CysA), two transmembrane proteins (CysT and CysW) and a solute-binding protein (CysP).

The protein localises to the cell inner membrane. It carries out the reaction sulfate(out) + ATP + H2O = sulfate(in) + ADP + phosphate + H(+). It catalyses the reaction thiosulfate(out) + ATP + H2O = thiosulfate(in) + ADP + phosphate + H(+). Part of the ABC transporter complex CysAWTP involved in sulfate/thiosulfate import. Responsible for energy coupling to the transport system. This chain is Sulfate/thiosulfate import ATP-binding protein CysA, found in Burkholderia pseudomallei (strain K96243).